The following is a 125-amino-acid chain: Small ribosomal subunit protein uS12 (125 aa).

The segment at 1–28 (MPTISQLIGSERKRLTRKTKSPALKSCP) is disordered. D89 bears the 3-methylthioaspartic acid mark. The segment at 104 to 125 (TAGVKDRRQSRSKYGAKAPKND) is disordered.

Belongs to the universal ribosomal protein uS12 family. Part of the 30S ribosomal subunit. Contacts proteins S8 and S17. May interact with IF1 in the 30S initiation complex.

Functionally, with S4 and S5 plays an important role in translational accuracy. In terms of biological role, interacts with and stabilizes bases of the 16S rRNA that are involved in tRNA selection in the A site and with the mRNA backbone. Located at the interface of the 30S and 50S subunits, it traverses the body of the 30S subunit contacting proteins on the other side and probably holding the rRNA structure together. The combined cluster of proteins S8, S12 and S17 appears to hold together the shoulder and platform of the 30S subunit. This is Small ribosomal subunit protein uS12 from Prochlorococcus marinus subsp. pastoris (strain CCMP1986 / NIES-2087 / MED4).